Consider the following 494-residue polypeptide: Xylan glycosyltransferase MUCI21 (494 aa).

At 1–40 (MRQNLKKVAQIKVDESKKLFPYVFRVKTSCGNCAKRSKPK) the chain is on the cytoplasmic side. The helical; Signal-anchor for type II membrane protein transmembrane segment at 41-61 (LIYLLIFSLISSCFVFAPQLL) threads the bilayer. Topologically, residues 62 to 494 (CFPYPSALFL…LIDAYAKSIR (433 aa)) are lumenal. A glycan (N-linked (GlcNAc...) asparagine) is linked at Asn-375.

This sequence belongs to the glycosyltransferase 61 family.

The protein localises to the golgi apparatus membrane. Functionally, glycosyletransferase required for the proper composition and structural properties of released seed coat mucilage. Required for the production of highly branched xylan polymers in seed coat mucilage. Facilitates the addition of xylose residues directly to the xylan backbone. Xylan with xylose side chains seems to be necessary for pectin attachment to the seed surface. Essential for xylan synthesis in seed coat epidermal (SCE) cells. The chain is Xylan glycosyltransferase MUCI21 from Arabidopsis thaliana (Mouse-ear cress).